Reading from the N-terminus, the 117-residue chain is MPRVKRGVQARARHKKVLKQAKGYYGARSRVYRVAFQAVTKAGQYAYRDRRNKKRQFRQLWIARINAASRQNGLSYSRFINGLKKASIEIDRKILADIAVFDKAAFAVLVEKAKASL.

The protein belongs to the bacterial ribosomal protein bL20 family.

Its function is as follows. Binds directly to 23S ribosomal RNA and is necessary for the in vitro assembly process of the 50S ribosomal subunit. It is not involved in the protein synthesizing functions of that subunit. This chain is Large ribosomal subunit protein bL20, found in Vibrio atlanticus (strain LGP32) (Vibrio splendidus (strain Mel32)).